The following is a 707-amino-acid chain: Elongation factor G (707 aa).

Residues 8 to 288 (QFTRNIGIMA…AVCKFLPSPA (281 aa)) enclose the tr-type G domain. GTP is bound by residues 17 to 24 (AHIDAGKT), 85 to 89 (DTPGH), and 139 to 142 (NKMD). The tract at residues 288 to 308 (ADTPTVEGTDPSDPNKVIERK) is disordered.

Belongs to the TRAFAC class translation factor GTPase superfamily. Classic translation factor GTPase family. EF-G/EF-2 subfamily.

It is found in the cytoplasm. Functionally, catalyzes the GTP-dependent ribosomal translocation step during translation elongation. During this step, the ribosome changes from the pre-translocational (PRE) to the post-translocational (POST) state as the newly formed A-site-bound peptidyl-tRNA and P-site-bound deacylated tRNA move to the P and E sites, respectively. Catalyzes the coordinated movement of the two tRNA molecules, the mRNA and conformational changes in the ribosome. This chain is Elongation factor G, found in Porphyromonas gingivalis (strain ATCC 33277 / DSM 20709 / CIP 103683 / JCM 12257 / NCTC 11834 / 2561).